The chain runs to 271 residues: MTIIHPLLASSSAPNYRQSWRLAGVWRRAINLMTESGELLTLHRQGSGFGPGGWVLRRAQFDALCGGLCGNERPQVVAQGIRLGRFTVKQPQRYCLLRITPPAHPQPLAAAWMQRAEETGLFGPLALAASDPLPAELRQFRHCFQAALNGVKTDWRHWLGKGPGLTPSHDDTLSGMLLAAWYYGALDARSGRPFFACSDNLQLVTTAVSVSYLRYAAQGYFASPLLHFVHALSCPKRTAVAIDSLLALGHTSGADTLLGFWLGQQLLQGKP.

This sequence belongs to the AllH family. In terms of assembly, the OXTCase is composed of 3 subunits, AllF, AllG and AllH. Mg(2+) is required as a cofactor.

It catalyses the reaction oxamate + carbamoyl phosphate = N-carbamoyl-2-oxoglycine + phosphate. Its pathway is nitrogen metabolism; (S)-allantoin degradation. In terms of biological role, component of a carbamoyltransferase involved in the anaerobic nitrogen utilization via the assimilation of allantoin. Catalyzes the conversion of oxalurate (N-carbamoyl-2-oxoglycine) to oxamate and carbamoyl phosphate. The chain is Oxamate carbamoyltransferase subunit AllH from Escherichia coli O157:H7.